The following is a 49-amino-acid chain: Large ribosomal subunit protein bL33B (49 aa).

The protein belongs to the bacterial ribosomal protein bL33 family.

This chain is Large ribosomal subunit protein bL33B, found in Bacillus cytotoxicus (strain DSM 22905 / CIP 110041 / 391-98 / NVH 391-98).